The primary structure comprises 156 residues: 6,7-dimethyl-8-ribityllumazine synthase (156 aa).

5-amino-6-(D-ribitylamino)uracil is bound by residues phenylalanine 25, 59–61 (AFE), and 83–85 (AVI). 88-89 (AT) lines the (2S)-2-hydroxy-3-oxobutyl phosphate pocket. Histidine 91 acts as the Proton donor in catalysis. Phenylalanine 116 contributes to the 5-amino-6-(D-ribitylamino)uracil binding site. Arginine 130 is a (2S)-2-hydroxy-3-oxobutyl phosphate binding site.

The protein belongs to the DMRL synthase family.

The enzyme catalyses (2S)-2-hydroxy-3-oxobutyl phosphate + 5-amino-6-(D-ribitylamino)uracil = 6,7-dimethyl-8-(1-D-ribityl)lumazine + phosphate + 2 H2O + H(+). The protein operates within cofactor biosynthesis; riboflavin biosynthesis; riboflavin from 2-hydroxy-3-oxobutyl phosphate and 5-amino-6-(D-ribitylamino)uracil: step 1/2. Functionally, catalyzes the formation of 6,7-dimethyl-8-ribityllumazine by condensation of 5-amino-6-(D-ribitylamino)uracil with 3,4-dihydroxy-2-butanone 4-phosphate. This is the penultimate step in the biosynthesis of riboflavin. This chain is 6,7-dimethyl-8-ribityllumazine synthase, found in Nitratidesulfovibrio vulgaris (strain ATCC 29579 / DSM 644 / CCUG 34227 / NCIMB 8303 / VKM B-1760 / Hildenborough) (Desulfovibrio vulgaris).